Reading from the N-terminus, the 285-residue chain is MMQTKKPDWLRIRIKANQSVEEVIKLLKDLSLHTVCQEAQCPNIFECFSKKTATFLILGDVCTRNCTFCDVKKGKPQEVDKNEPKKIAEAVKVLNLSYVVVTSVTRDDLEDGGAEHFANVIEKIKELNPQTKVEVLIPDFNGDEKAIYKVVSARPDVLSHNVETVPRLYPTVRSKADYERSLSVLKVAKKMDNRIYTKSGLMVGLGETKEEVKEVLKNLRSVGCDFVTIGQYLSPSKQHYPVIEYIHPNVFEEYKEYAISIGFKHVMSAPLVRSSYLAEETTKII.

The [4Fe-4S] cluster site is built by Cys-36, Cys-41, Cys-47, Cys-62, Cys-66, Cys-69, and Ser-275. Residues 48-264 form the Radical SAM core domain; that stretch reads FSKKTATFLI…KEYAISIGFK (217 aa).

The protein belongs to the radical SAM superfamily. Lipoyl synthase family. [4Fe-4S] cluster is required as a cofactor.

The protein resides in the cytoplasm. It catalyses the reaction [[Fe-S] cluster scaffold protein carrying a second [4Fe-4S](2+) cluster] + N(6)-octanoyl-L-lysyl-[protein] + 2 oxidized [2Fe-2S]-[ferredoxin] + 2 S-adenosyl-L-methionine + 4 H(+) = [[Fe-S] cluster scaffold protein] + N(6)-[(R)-dihydrolipoyl]-L-lysyl-[protein] + 4 Fe(3+) + 2 hydrogen sulfide + 2 5'-deoxyadenosine + 2 L-methionine + 2 reduced [2Fe-2S]-[ferredoxin]. The protein operates within protein modification; protein lipoylation via endogenous pathway; protein N(6)-(lipoyl)lysine from octanoyl-[acyl-carrier-protein]: step 2/2. In terms of biological role, catalyzes the radical-mediated insertion of two sulfur atoms into the C-6 and C-8 positions of the octanoyl moiety bound to the lipoyl domains of lipoate-dependent enzymes, thereby converting the octanoylated domains into lipoylated derivatives. In Caldicellulosiruptor saccharolyticus (strain ATCC 43494 / DSM 8903 / Tp8T 6331), this protein is Lipoyl synthase.